Reading from the N-terminus, the 23-residue chain is Lycosin-II (23 aa).

L21 bears the Leucine amide mark.

Expressed by the venom gland.

Its subcellular location is the secreted. It localises to the target cell membrane. Functionally, has strong antibacterial activity and biofilm inhibition effects against Gram-positive and -negative bacteria including E.coli, S.epidermidis, and A.baumannii and oxacillin-resistant S.aureus and meropenem-resistant P.aeruginosa. Is not cytotoxic against human foreskin fibroblast Hs27 or hemolytic against mammalian red blood cells. Its mechanism of action involves binding to lipoteichoic acid and lipopolysaccharide of Gram-positive and Gram-negative bacterial membranes, respectively, to destroy the bacterial membrane. In addition, it shows anti-inflammatory effects by inhibiting the expression of pro-inflammatory cytokines that are increased during bacterial infection in Hs27 cells. The polypeptide is Lycosin-II (Lycosa singoriensis (Wolf spider)).